A 425-amino-acid polypeptide reads, in one-letter code: tRNA(Ile)-lysidine synthase (425 aa).

27–32 (SGGLDS) serves as a coordination point for ATP.

It belongs to the tRNA(Ile)-lysidine synthase family.

The protein resides in the cytoplasm. The enzyme catalyses cytidine(34) in tRNA(Ile2) + L-lysine + ATP = lysidine(34) in tRNA(Ile2) + AMP + diphosphate + H(+). Functionally, ligates lysine onto the cytidine present at position 34 of the AUA codon-specific tRNA(Ile) that contains the anticodon CAU, in an ATP-dependent manner. Cytidine is converted to lysidine, thus changing the amino acid specificity of the tRNA from methionine to isoleucine. This is tRNA(Ile)-lysidine synthase from Streptococcus pneumoniae (strain Hungary19A-6).